Consider the following 139-residue polypeptide: Probable DNA-binding protein (139 aa).

Positions 97–139 (DEPSREASPDLGAAGAELEDESAQAGAVQGPETLRSQVLRART) are disordered.

This is Probable DNA-binding protein from Homo sapiens (Human).